We begin with the raw amino-acid sequence, 438 residues long: uncharacterized protein (438 aa).

Position 59 (His-59) interacts with Zn(2+). Catalysis depends on Glu-62, which acts as the Proton acceptor. Zn(2+) contacts are provided by His-63 and Glu-139.

It belongs to the peptidase M16 family. Requires Zn(2+) as cofactor.

This is an uncharacterized protein from Mycobacterium tuberculosis (strain CDC 1551 / Oshkosh).